Here is a 132-residue protein sequence, read N- to C-terminus: Agouti-signaling protein (132 aa).

The first 22 residues, 1–22, serve as a signal peptide directing secretion; the sequence is MDVTRLVLATLLVFLCFFAAYS. Asparagine 39 is a glycosylation site (N-linked (GlcNAc...) asparagine). The disordered stretch occupies residues 60-93; the sequence is KKISRKEAEKRRSSKKEASKQKVARPRTPLSVPC. Over residues 64 to 79 the composition is skewed to basic and acidic residues; that stretch reads RKEAEKRRSSKKEASK. 5 disulfide bridges follow: cysteine 93/cysteine 108, cysteine 100/cysteine 114, cysteine 107/cysteine 125, cysteine 111/cysteine 132, and cysteine 116/cysteine 123. The 40-residue stretch at 93 to 132 folds into the Agouti domain; that stretch reads CVSTRGSCKPPAPACCHPCASCQCRFFRSACSCRVLNVNC.

The protein localises to the secreted. Involved in the regulation of melanogenesis. The binding of ASP to MC1R precludes alpha-MSH initiated signaling and thus blocks production of cAMP, leading to a down-regulation of eumelanogenesis (brown/black pigment) and thus increasing synthesis of pheomelanin (yellow/red pigment). The polypeptide is Agouti-signaling protein (ASIP) (Cebuella pygmaea (Pygmy marmoset)).